The sequence spans 165 residues: MGRAAKRTPGYRVQNRKHKRKPCKDCVAQGLPLTRDAKYPGPRCATHHREFKAARSSTSWETRILATYGITAEEYWAIYEFQGGRCYICQRANGKRKRLSVDHDHKTGIVRGLLCTMCNKYILGWARDCIEMLQRAIDYLRKPPAVQVIGERIAPIEADKLRSQT.

This is Gene 59 protein (59) from Mycobacterium (Mycobacteriophage D29).